The following is a 416-amino-acid chain: MLEQMGIAAKAASYKLALLSSCEKNRVLEKIADELEAQMESILSANVQDVEQARANGLSEAMLDRLALTPARLKAIADDVRQVCNLADPVGQVIDGGLLDSGLRLERRRVPLGVVGVIYEARPNVTVDVASLCLKTGNAVILRGGKETHRTNAATVRVIQKALKACGLPEAAVQAIDNPDRSLVNEMLRMDKYIDMLIPRGGAGLHKLCREQSTIPVITGGIGVCHIFVDSSADIAPALKIIVNAKTQRPSTCNTVETLLVHQDIAERFLPVLSKQMAESGVTLHGDETVMQALHGPAKLVPLKPEELDNEFLSLDLNVVVVENMDGAIAHIREHGTQHSDAILTSDMHNAARFVNEVDSAAVYVNASTRFTDGGQFGLGAEVAVSTQKLHARGPMGLEALTTYKWIGFGDGTIRA.

It belongs to the gamma-glutamyl phosphate reductase family.

The protein localises to the cytoplasm. The catalysed reaction is L-glutamate 5-semialdehyde + phosphate + NADP(+) = L-glutamyl 5-phosphate + NADPH + H(+). Its pathway is amino-acid biosynthesis; L-proline biosynthesis; L-glutamate 5-semialdehyde from L-glutamate: step 2/2. Catalyzes the NADPH-dependent reduction of L-glutamate 5-phosphate into L-glutamate 5-semialdehyde and phosphate. The product spontaneously undergoes cyclization to form 1-pyrroline-5-carboxylate. In Salmonella schwarzengrund (strain CVM19633), this protein is Gamma-glutamyl phosphate reductase.